The chain runs to 163 residues: MPRVWKFGDQINTDDILPGKYAPFMVGEDRFHLYAFAHLRPEFAKEVRPGDILVFGRNAGLGSSREYAPEALKRLGVRAIIAKSYARIFFRNLVNLGIVPFESEEVVDALEDGDEVELDLESGVLTRGEERFALRPPPPFLLEALKEGSLLDYYKKHGRFPGE.

The protein belongs to the LeuD family. In terms of assembly, heterodimer of HacA and HacB.

The catalysed reaction is (2R,3S)-homoisocitrate = cis-homoaconitate + H2O. The protein operates within amino-acid biosynthesis; L-lysine biosynthesis via AAA pathway; L-alpha-aminoadipate from 2-oxoglutarate: step 3/5. With respect to regulation, is not inhibited by lysine. Functionally, catalyzes the reversible hydration of cis-homoaconitate ((Z)-but-1-ene-1,2,4-tricarboxylate) to homoisocitrate ((1R,2S)-1-hydroxybutane-1,2,4-tricarboxylate). Can catalyze neither the dehydration of (R)-homocitrate ((2R)-2-hydroxybutane-1,2,4-tricarboxylate) into cis-homoaconitate in vitro, nor the reverse reaction. Is not active toward (S)-homocitrate, cis-aconitate or citrate as substrate. In Thermus thermophilus (strain ATCC BAA-163 / DSM 7039 / HB27), this protein is Homoaconitase small subunit (hacB).